The primary structure comprises 89 residues: Small ribosomal subunit protein uS19 (89 aa).

It belongs to the universal ribosomal protein uS19 family.

Protein S19 forms a complex with S13 that binds strongly to the 16S ribosomal RNA. The sequence is that of Small ribosomal subunit protein uS19 from Xanthomonas axonopodis pv. citri (strain 306).